Consider the following 207-residue polypeptide: High frequency lysogenization protein HflD homolog (207 aa).

This sequence belongs to the HflD family.

It localises to the cytoplasm. The protein resides in the cell inner membrane. In Methylococcus capsulatus (strain ATCC 33009 / NCIMB 11132 / Bath), this protein is High frequency lysogenization protein HflD homolog.